The chain runs to 346 residues: Aspartate-semialdehyde dehydrogenase (346 aa).

NADP(+) contacts are provided by residues 13–16 (TGAV) and 41–42 (RS). Residue S98 is modified to Phosphoserine. R101 provides a ligand contact to phosphate. Residue C130 is the Acyl-thioester intermediate of the active site. A Phosphotyrosine modification is found at Y146. Position 157 (Q157) interacts with substrate. 160-161 (SG) contacts NADP(+). K221 contributes to the phosphate binding site. R243 serves as a coordination point for substrate. H250 serves as the catalytic Proton acceptor. N324 is a binding site for NADP(+).

This sequence belongs to the aspartate-semialdehyde dehydrogenase family. In terms of assembly, homodimer.

The catalysed reaction is L-aspartate 4-semialdehyde + phosphate + NADP(+) = 4-phospho-L-aspartate + NADPH + H(+). The protein operates within amino-acid biosynthesis; L-lysine biosynthesis via DAP pathway; (S)-tetrahydrodipicolinate from L-aspartate: step 2/4. It participates in amino-acid biosynthesis; L-methionine biosynthesis via de novo pathway; L-homoserine from L-aspartate: step 2/3. Its pathway is amino-acid biosynthesis; L-threonine biosynthesis; L-threonine from L-aspartate: step 2/5. Functionally, catalyzes the NADPH-dependent formation of L-aspartate-semialdehyde (L-ASA) by the reductive dephosphorylation of L-aspartyl-4-phosphate. The protein is Aspartate-semialdehyde dehydrogenase of Bacillus subtilis (strain 168).